Reading from the N-terminus, the 397-residue chain is MIPNDDDDANSMKNYPLNDDDANSMKNYPLNDDDANSMENYPLRSIPTELSHTCSLIPPSLPNPSEAAADMSFNSELNQIMARPCDMLPANGGAVGHNPFLEPGFNCPETTDWIPSPLPHIYFPSGSPNLIMEDGVIDEIHKQSDLPLWYDDLITTDEDPLMSSILGDLLLDTNFNSASKVQQPSMQSQIQQPQAVLQQPSSCVELRPLDRTVSSNSNNNSNSNNAAAAAKGRMRWTPELHEVFVDAVNQLGGSNEATPKGVLKHMKVEGLTIFHVKSHLQKYRTAKYIPVPSEGSPEARLTPLEQITSDDTKRGIDITETLRIQMEHQKKLHEQLESLRTMQLRIEEQGKALLMMIEKQNMGFGGPEQGEKTSAKTPENGSEESESPRPKRPRNEE.

The segment at 1 to 27 is disordered; sequence MIPNDDDDANSMKNYPLNDDDANSMKN. The 61-residue stretch at 228–288 folds into the HTH myb-type domain; that stretch reads AAAKGRMRWT…HLQKYRTAKY (61 aa). The H-T-H motif DNA-binding region spans 259-284; that stretch reads PKGVLKHMKVEGLTIFHVKSHLQKYR. Residues 319–339 are coiled coil; that stretch reads TETLRIQMEHQKKLHEQLESL. The LHEQLE motif lies at 332-337; it reads LHEQLE. Residues 359–397 form a disordered region; sequence KQNMGFGGPEQGEKTSAKTPENGSEESESPRPKRPRNEE. Residues 386 to 397 show a composition bias toward basic and acidic residues; that stretch reads ESPRPKRPRNEE. S387 carries the post-translational modification Phosphoserine.

This sequence belongs to the MYB-CC family.

It localises to the nucleus. Its function is as follows. Transcription factor involved in male gametophyte development. This is Myb family transcription factor PHL4 from Arabidopsis thaliana (Mouse-ear cress).